Reading from the N-terminus, the 159-residue chain is Endoribonuclease YbeY (159 aa).

Zn(2+) contacts are provided by His-123, His-127, and His-133.

Belongs to the endoribonuclease YbeY family. The cofactor is Zn(2+).

Its subcellular location is the cytoplasm. Its function is as follows. Single strand-specific metallo-endoribonuclease involved in late-stage 70S ribosome quality control and in maturation of the 3' terminus of the 16S rRNA. This chain is Endoribonuclease YbeY, found in Bacillus pumilus (strain SAFR-032).